The following is an 849-amino-acid chain: Villin-1 (849 aa).

Gelsolin-like repeat units lie at residues 30 to 107, 147 to 213, 262 to 335, 405 to 475, and 527 to 566; these read IEKS…DKFL, RVTE…EDGK, VPVE…TVEF, QEQL…PEMF, and AIQV…DHNL. Positions 739-849 are disordered; sequence ETPERSLRKS…AVATGTPRRL (111 aa). Composition is skewed to low complexity over residues 747-782 and 791-823; these read KSSS…SAST and PAAL…STPS.

The protein belongs to the villin/gelsolin family.

The protein localises to the cytoplasm. The protein resides in the cytoskeleton. Its function is as follows. Ca(2+)-independent actin-binding protein. Binds actin microfilaments (MFs). Involved in actin filament bundling, severing and capping. Caps the barbed end of actin filaments and protects them from disassembly. Promotes VLN3-mediated MF severing. The polypeptide is Villin-1 (Oryza sativa subsp. indica (Rice)).